The following is an 826-amino-acid chain: BLOC-2 complex member HPS5 homolog (826 aa).

3 WD repeats span residues 22–61 (KHHNRIKYTCFDISDSYIIFGASSGSLYLFNRNGKFLLLI), 63–102 (NKHGAITSLSISANSKYVAFATQRSLICVYAVNLSAQATP), and 110–149 (DQSVQVTCIHWTQDEKQFYYGDSRGQVSLVLLSSFIGHSL). The span at 422-446 (ALDTHSSGGSSATTERSLSGGSSSR) shows a compositional bias: polar residues. A disordered region spans residues 422 to 447 (ALDTHSSGGSSATTERSLSGGSSSRA).

The protein belongs to the HPS5 family. In terms of tissue distribution, expressed in eye pigment granules.

Its function is as follows. Has a role in the biogenesis of eye pigment granules. Eye pigment granules are specialized forms of late endosomes or lysosomes. Biogenesis of pigment granules in the eye requires molecular components required for protein delivery to lysosomes. The polypeptide is BLOC-2 complex member HPS5 homolog (Drosophila melanogaster (Fruit fly)).